A 380-amino-acid chain; its full sequence is Alkanesulfonate monooxygenase (380 aa).

This sequence belongs to the SsuD family. Homotetramer.

It carries out the reaction an alkanesulfonate + FMNH2 + O2 = an aldehyde + FMN + sulfite + H2O + 2 H(+). In terms of biological role, catalyzes the desulfonation of aliphatic sulfonates. This is Alkanesulfonate monooxygenase from Pectobacterium carotovorum subsp. carotovorum (strain PC1).